A 361-amino-acid chain; its full sequence is Probable mannitol dehydrogenase (361 aa).

The Zn(2+) site is built by Cys51, His73, Cys104, Cys107, Cys110, Cys118, and Cys167.

It belongs to the zinc-containing alcohol dehydrogenase family. The cofactor is Zn(2+).

The catalysed reaction is D-mannitol + NAD(+) = D-mannose + NADH + H(+). Oxidizes mannitol to mannose. Provides the initial step by which translocated mannitol is committed to central metabolism and, by regulating mannitol pool size, is important in regulating salt tolerance at the cellular level. In Mesembryanthemum crystallinum (Common ice plant), this protein is Probable mannitol dehydrogenase (ELI3).